Here is a 196-residue protein sequence, read N- to C-terminus: Charged multivesicular body protein 1a (196 aa).

M1 is subject to N-acetylmethionine. A coiled-coil region spans residues 5–42 (LFQLKFTAKQLEKLAKKAEKDSKAEQAKVKKALQQKNV). S101 is subject to Phosphoserine. Positions 102–124 (AMDLQKVSAVMDRFEQQVQNLDV) form a coiled coil. S173 is modified (phosphoserine). The MIT-interacting motif motif lies at 185 to 195 (DQLSRRLAALR).

It belongs to the SNF7 family. Probable peripherally associated component of the endosomal sorting required for transport complex III (ESCRT-III). ESCRT-III components are thought to multimerize to form a flat lattice on the perimeter membrane of the endosome. Several assembly forms of ESCRT-III may exist that interact and act sequentially. Self-associates. Interacts with CHMP1B. Interacts with VPS4A. Interacts with VPS4B. Interacts with PHF1. Interacts with IST1. Interacts with MITD1. As to expression, highly expressed in adult heart, kidney and liver. Expressed at lower levels in adult colon, spleen, lung, brain, testis and muscle. Also expressed in myoblasts and embryo fibroblasts.

The protein localises to the cytoplasm. It is found in the endosome membrane. The protein resides in the nucleus matrix. Probable peripherally associated component of the endosomal sorting required for transport complex III (ESCRT-III) which is involved in multivesicular bodies (MVBs) formation and sorting of endosomal cargo proteins into MVBs. MVBs contain intraluminal vesicles (ILVs) that are generated by invagination and scission from the limiting membrane of the endosome and mostly are delivered to lysosomes enabling degradation of membrane proteins, such as stimulated growth factor receptors, lysosomal enzymes and lipids. The MVB pathway appears to require the sequential function of ESCRT-O, -I,-II and -III complexes. ESCRT-III proteins mostly dissociate from the invaginating membrane before the ILV is released. The ESCRT machinery also functions in topologically equivalent membrane fission events, such as the terminal stages of cytokinesis. ESCRT-III proteins are believed to mediate the necessary vesicle extrusion and/or membrane fission activities, possibly in conjunction with the AAA ATPase VPS4. Involved in cytokinesis. Involved in recruiting VPS4A and/or VPS4B to the midbody of dividing cells. May also be involved in chromosome condensation. Targets the Polycomb group (PcG) protein BMI1/PCGF4 to regions of condensed chromatin. May play a role in stable cell cycle progression and in PcG gene silencing. In Mus musculus (Mouse), this protein is Charged multivesicular body protein 1a (Chmp1a).